The primary structure comprises 37 residues: Toxin Bcg III 28.78 (37 aa).

A disulfide bridge links cysteine 6 with cysteine 31.

The protein resides in the secreted. Its subcellular location is the nematocyst. The polypeptide is Toxin Bcg III 28.78 (Bunodosoma cangicum (Sea anemone)).